Consider the following 190-residue polypeptide: Ohanin (190 aa).

The signal sequence occupies residues 1 to 20 (MLLFTLCFFADQENGGKALA). One can recognise a B30.2/SPRY domain in the interval 21 to 127 (SPPGNWQKAD…RIWQKGLWWL (107 aa)). Positions 128-190 (RRLETDSDKL…IGARVSLANL (63 aa)) are excised as a propeptide.

In terms of tissue distribution, expressed by the venom gland.

The protein localises to the secreted. Functionally, neurotoxin that produces dose-dependent hypolocomotion and hyperalgesia in mice. May directly act on the central nervous system, as it is 6500-fold more potent when administered intracerebroventricularly than intraperitoneal. The protein is Ohanin of Ophiophagus hannah (King cobra).